The chain runs to 418 residues: Deubiquitinase and deneddylase Dub1 (418 aa).

Over residues 1–11 the composition is skewed to polar residues; it reads MLSPTNSTSKT. Positions 1-23 are disordered; the sequence is MLSPTNSTSKTAPVPPQDSSKPV. The helical transmembrane segment at 40 to 60 threads the bilayer; it reads TALVVLLVVVTLGLILLFYSF. A disordered region spans residues 72–145; that stretch reads TRPSTKEQPT…LPPKAPKPVK (74 aa). Residues 86-141 show a composition bias toward pro residues; it reads VPLPSPPLAVPRPSTPPPPVISRPSMPPAPTPAISPPSTPSAPKPSTPPPLPPKAP. Catalysis depends on residues histidine 288, aspartate 305, and cysteine 358.

This sequence belongs to the peptidase C48 family.

It localises to the secreted. Its subcellular location is the host cell. It is found in the membrane. In terms of biological role, effector proteins function to alter host cell physiology and promote bacterial survival in host tissues. This protease possesses deubiquitinating and deneddylating activities. This Chlamydia trachomatis serovar E (strain Sweden2) protein is Deubiquitinase and deneddylase Dub1 (cdu1).